The primary structure comprises 175 residues: Riboflavin kinase (175 aa).

54–59 (GLGEGK) lines the CDP pocket. Thr83 and Asn85 together coordinate Mg(2+). The FMN site is built by Thr142 and Glu150. 155-158 (FHLR) provides a ligand contact to CDP.

It belongs to the archaeal riboflavin kinase family. Mg(2+) serves as cofactor.

It catalyses the reaction riboflavin + CTP = CDP + FMN + H(+). It functions in the pathway cofactor biosynthesis; FMN biosynthesis; FMN from riboflavin (CTP route): step 1/1. Its function is as follows. Catalyzes the CTP-dependent phosphorylation of riboflavin (vitamin B2) to form flavin mononucleotide (FMN). This is Riboflavin kinase from Saccharolobus solfataricus (strain ATCC 35092 / DSM 1617 / JCM 11322 / P2) (Sulfolobus solfataricus).